A 280-amino-acid polypeptide reads, in one-letter code: Probable ketoamine kinase lp_1983 (280 aa).

87 to 89 (DWL) provides a ligand contact to ATP. Asp-189 acts as the Proton acceptor in catalysis.

The protein belongs to the fructosamine kinase family.

It catalyses the reaction N(6)-(D-ribulosyl)-L-lysine + ATP = N(6)-(3-O-phospho-D-ribulosyl)-L-lysine + ADP + H(+). It carries out the reaction N-(D-ribulosyl)-cadaverine + ATP = N-(3-O-phospho-D-ribulosyl)-cadaverine + ADP + H(+). The catalysed reaction is N(6)-(D-erythrulosyl)-L-lysine + ATP = N(6)-(3-O-phospho-D-erythrulosyl)-L-lysine + ADP + H(+). The enzyme catalyses N-(D-erythrulosyl)-cadaverine + ATP = N-(3-O-phospho-D-erythrulosyl)-cadaverine + ADP + H(+). It catalyses the reaction N(6)-D-ribulosyl-L-lysyl-[protein] + ATP = N(6)-(3-O-phospho-D-ribulosyl)-L-lysyl-[protein] + ADP + H(+). It carries out the reaction N(6)-(D-erythrulosyl)-L-lysyl-[protein] + ATP = N(6)-(3-O-phospho-D-erythrulosyl)-L-lysyl-[protein] + ADP + H(+). Its function is as follows. Ketoamine kinase that phosphorylates ketoamines, such as erythruloselysine, erythrulosecadaverine, ribuloselysine and ribulosecadaverine, on the third carbon of the sugar moiety to generate ketoamine 3-phosphate. Has higher activity on free lysine (erythruloselysine and ribuloselysine), than on ribuloselysine and erythruloselysine residues on glycated proteins. The protein is Probable ketoamine kinase lp_1983 of Lactiplantibacillus plantarum (strain ATCC BAA-793 / NCIMB 8826 / WCFS1) (Lactobacillus plantarum).